Reading from the N-terminus, the 398-residue chain is Dihydrolipoyllysine-residue succinyltransferase component of 2-oxoglutarate dehydrogenase complex (398 aa).

Residues 2–77 enclose the Lipoyl-binding domain; that stretch reads SIKIIIPSLG…TVGEEVGEIN (76 aa). At Lys-43 the chain carries N6-lipoyllysine. Residues 112–149 enclose the Peripheral subunit-binding (PSBD) domain; that stretch reads ILAPSVQKLVTENKLDPNNIKGTGRGGRITKYDVLETI. Catalysis depends on residues His-369 and Asp-373.

This sequence belongs to the 2-oxoacid dehydrogenase family. As to quaternary structure, forms a 24-polypeptide structural core with octahedral symmetry. Part of the 2-oxoglutarate dehydrogenase (OGDH) complex composed of E1 (2-oxoglutarate dehydrogenase), E2 (dihydrolipoamide succinyltransferase) and E3 (dihydrolipoamide dehydrogenase); the complex contains multiple copies of the three enzymatic components (E1, E2 and E3). (R)-lipoate is required as a cofactor.

It catalyses the reaction N(6)-[(R)-dihydrolipoyl]-L-lysyl-[protein] + succinyl-CoA = N(6)-[(R)-S(8)-succinyldihydrolipoyl]-L-lysyl-[protein] + CoA. It functions in the pathway amino-acid degradation; L-lysine degradation via saccharopine pathway; glutaryl-CoA from L-lysine: step 6/6. Its function is as follows. E2 component of the 2-oxoglutarate dehydrogenase (OGDH) complex which catalyzes the second step in the conversion of 2-oxoglutarate to succinyl-CoA and CO(2). The chain is Dihydrolipoyllysine-residue succinyltransferase component of 2-oxoglutarate dehydrogenase complex (sucB) from Rickettsia typhi (strain ATCC VR-144 / Wilmington).